The sequence spans 281 residues: RAD52 motif-containing protein 1 (281 aa).

Positions 1–92 (MAELISFVVP…KPLFQTSPVK (92 aa)) are necessary for nuclear localization and for nucleolar accumulation in response to heat shock. In terms of domain architecture, RRM spans 15–98 (KVLLVWDLST…SPVKVRLGTR (84 aa)). The tract at residues 90 to 133 (PVKVRLGTRHKALQHQAFALNSSRCQELANYYFGFSGWSKRIIK) is necessary for nuclear and nucleolar localization.

As to quaternary structure, homodimer.

The protein resides in the nucleus. Its subcellular location is the cytoplasm. It is found in the nucleolus. The protein localises to the cajal body. It localises to the PML body. May confer resistance to the antitumor agent cisplatin. Binds to DNA and RNA. This is RAD52 motif-containing protein 1 (Rdm1) from Mus musculus (Mouse).